The following is a 245-amino-acid chain: tRNA1(Val) (adenine(37)-N6)-methyltransferase (245 aa).

The protein belongs to the methyltransferase superfamily. tRNA (adenine-N(6)-)-methyltransferase family.

The protein localises to the cytoplasm. It carries out the reaction adenosine(37) in tRNA1(Val) + S-adenosyl-L-methionine = N(6)-methyladenosine(37) in tRNA1(Val) + S-adenosyl-L-homocysteine + H(+). Specifically methylates the adenine in position 37 of tRNA(1)(Val) (anticodon cmo5UAC). The protein is tRNA1(Val) (adenine(37)-N6)-methyltransferase of Klebsiella pneumoniae (strain 342).